The primary structure comprises 499 residues: Maturase K (499 aa).

Belongs to the intron maturase 2 family. MatK subfamily.

It is found in the plastid. The protein localises to the chloroplast. In terms of biological role, usually encoded in the trnK tRNA gene intron. Probably assists in splicing its own and other chloroplast group II introns. This chain is Maturase K, found in Ceratozamia mexicana (Mexican horncone).